The sequence spans 295 residues: Ribosomal RNA small subunit methyltransferase A (295 aa).

Residues Asn29, Leu31, Gly56, Glu77, Asp102, and Asn128 each coordinate S-adenosyl-L-methionine.

It belongs to the class I-like SAM-binding methyltransferase superfamily. rRNA adenine N(6)-methyltransferase family. RsmA subfamily.

The protein localises to the cytoplasm. The enzyme catalyses adenosine(1518)/adenosine(1519) in 16S rRNA + 4 S-adenosyl-L-methionine = N(6)-dimethyladenosine(1518)/N(6)-dimethyladenosine(1519) in 16S rRNA + 4 S-adenosyl-L-homocysteine + 4 H(+). In terms of biological role, specifically dimethylates two adjacent adenosines (A1518 and A1519) in the loop of a conserved hairpin near the 3'-end of 16S rRNA in the 30S particle. May play a critical role in biogenesis of 30S subunits. The chain is Ribosomal RNA small subunit methyltransferase A from Listeria innocua serovar 6a (strain ATCC BAA-680 / CLIP 11262).